The following is a 641-amino-acid chain: Forkhead box protein P4 (641 aa).

Disordered regions lie at residues 1–43 and 239–264; these read MMVE…NGEL and SFPT…RRES. Polar residues-rich tracts occupy residues 8-27 and 239-259; these read IRST…QSDS and SFPT…NGQN. The C2H2-type zinc-finger motif lies at 278–303; sequence GECRWPGCEALCEDMGQFIKHLNTEH. The tract at residues 320–341 is leucine-zipper; it reads VQQLEIQLAKESERLQAMMTHL. Residues 354–358 form a ctbp1-binding region; that stretch reads PLNLV. Residues 436–526 constitute a DNA-binding region (fork-head); sequence RPPFTYASLI…PPKMTGSPTL (91 aa). The interval 563 to 641 is disordered; the sequence is SSGSVLHGGH…ESESPMEDLP (79 aa). Residues 576 to 599 show a composition bias toward polar residues; that stretch reads TSTGEPGNSNGSSPRLSPQYSQSI. Over residues 600–611 the composition is skewed to basic and acidic residues; the sequence is HVKEEPAEDDVR. Positions 629–641 are enriched in acidic residues; that stretch reads RDLESESPMEDLP.

As to quaternary structure, dimerization is required for DNA-binding. In terms of tissue distribution, first expressed in the anterior neural field of stage 15 embryos. At stage 18, localized in three domains of the brain (rostral forebrain, midbrain and hindbrain) and in the eye anlage. Cerebral and retinal expression persists at later stages with additional expression in the branchial arches, at the base of the hatching gland, and in the pancreas.

The protein localises to the nucleus. Transcriptional repressor. The polypeptide is Forkhead box protein P4 (Xenopus laevis (African clawed frog)).